Here is a 160-residue protein sequence, read N- to C-terminus: MKTYSAKPAEISKKWILIDATNLVLGRLAAKVAVVLRGKDKPTYTPHMDCGNNVIIINAEQVKLTGDKSNAKNGKFYYRHSGFPGGIKVTTAGKILQSNYPERIIQLAVKRMLPSNKLGRKQFSNLYVYKGQTHPHAAQTPVLYDFAGKNSKNIRNQNIV.

It belongs to the universal ribosomal protein uL13 family. In terms of assembly, part of the 50S ribosomal subunit.

In terms of biological role, this protein is one of the early assembly proteins of the 50S ribosomal subunit, although it is not seen to bind rRNA by itself. It is important during the early stages of 50S assembly. This chain is Large ribosomal subunit protein uL13, found in Orientia tsutsugamushi (strain Ikeda) (Rickettsia tsutsugamushi).